Consider the following 125-residue polypeptide: Unclassified hydrophobin 8 (125 aa).

Residues 1-20 (MMFSKPVVLATTALATFAAA) form the signal peptide. 4 disulfide bridges follow: Cys-31-Cys-105, Cys-38-Cys-99, Cys-39-Cys-90, and Cys-106-Cys-119.

Belongs to the fungal hydrophobin family. As to quaternary structure, self-assembles to form functional amyloid fibrils called rodlets. Self-assembly into fibrillar rodlets occurs spontaneously at hydrophobic:hydrophilic interfaces and the rodlets further associate laterally to form amphipathic monolayers.

It localises to the secreted. It is found in the cell wall. Functionally, aerial growth, conidiation, and dispersal of filamentous fungi in the environment rely upon a capability of their secreting small amphipathic proteins called hydrophobins (HPBs) with low sequence identity. Class I can self-assemble into an outermost layer of rodlet bundles on aerial cell surfaces, conferring cellular hydrophobicity that supports fungal growth, development and dispersal; whereas Class II form highly ordered films at water-air interfaces through intermolecular interactions but contribute nothing to the rodlet structure. Hydph8 is an unclassified hydrophobin involved in mycelial growth. The polypeptide is Unclassified hydrophobin 8 (Pleurotus ostreatus (strain PC15) (Oyster mushroom)).